The following is a 971-amino-acid chain: Exportin-2 (971 aa).

Residues 29-102 (AEKFLESVEG…KANIVNLMLS (74 aa)) form the Importin N-terminal domain.

Belongs to the XPO2/CSE1 family. As to quaternary structure, interacts with cftr.

It localises to the cytoplasm. Its subcellular location is the nucleus. Its function is as follows. Export receptor for importin alpha. Mediates importin-alpha re-export from the nucleus to the cytoplasm after import substrates have been released into the nucleoplasm. Negatively regulates fluid secretion and plays a role in fluid homeostasis by down-regulating cftr activity. This is Exportin-2 (cse1l) from Oreochromis niloticus (Nile tilapia).